Reading from the N-terminus, the 1110-residue chain is Nonribisomal peptide synthetase benY (1110 aa).

Residues 47 to 443 are adenylation; sequence RALEFPEKIA…GRKDHQLKVR (397 aa). The 77-residue stretch at 575 to 651 folds into the Carrier domain; the sequence is TLETESEKIL…EMAQSARVVP (77 aa). Ser612 carries the post-translational modification O-(pantetheine 4'-phosphoryl)serine. The condensation stretch occupies residues 713-1025; the sequence is YILDGDVDFD…IFHHQNIDTK (313 aa).

The protein belongs to the NRP synthetase family.

Its pathway is secondary metabolite biosynthesis. In terms of biological role, nonribisomal peptide synthetase; part of the gene cluster that mediates the biosynthesis of benzomalvin A and D. The pathway begins with the loading of amino acid precursors onto the A domains of the non ribosomal peptide synthetases benY and benZ. BenY and the A1 domain of benZ are loaded with anthranilate (Anth), while the A2 domain of benZ is loaded with phenylalanine (Phe). N-methylation of Phe by the methyltransferase benX may happen before loading of Phe onto benZ, after loading of Phe, or after dipeptide formation. Condensation of Anth with the secondary amine of NmPhe or Phe is catalyzed by the C1 domain of benZ, forming a dipeptide intermediate. This is followed by in trans condensation of the Anth-NmPhe dipeptide with Anth bound to the T domain of benY by the C2 domain of benZ to form the linear tripeptide Anth-NmPhe-Anth. Cyclization and release of the tripeptide is then catalyzed by the C-terminal C domain of benY and the resulting 11-member macrocyclic intermediate is expected to spontaneously collapse to form the benzodiazepine core. Benzomalvin A is in conformational equilibrium with its atropisomer, benzomalvin D. This is Nonribisomal peptide synthetase benY from Aspergillus terreus.